We begin with the raw amino-acid sequence, 304 residues long: MRLPIILDTDPGIDDAAAIAAALFAPELDLQLMTTVAGNVSVEKTTRNALQLLHFWNADVPLAQGASMPLVRPLRDAASVHGESGMEGYDFVEHQRQPLAKPAFQAIRDALMHAAEPITLVAIGPLTNIALLLTQYPECVFNIRRLVIMGGSAGRGNFTPNAEFNIAIDPEAAAKVFHSGLEIVMCGLDVTNRALLAADYLATLPTLNQTGKMLHALFSHYRSGSMSSGLRMHDLCAIAWLARPELFTLQPCFVAVETQGTWTAGTTVVDIEGRLGQPANAQVALDIDVEGFQRWAAEVIALAP.

H233 is an active-site residue.

The protein belongs to the IUNH family. RihC subfamily.

Hydrolyzes both purine and pyrimidine ribonucleosides with a broad-substrate specificity. This is Non-specific ribonucleoside hydrolase RihC from Klebsiella pneumoniae subsp. pneumoniae (strain ATCC 700721 / MGH 78578).